The chain runs to 175 residues: 2-oxo-4-hydroxy-4-carboxy-5-ureidoimidazoline decarboxylase (175 aa).

Residue His-67 is the Proton donor of the active site. Substrate contacts are provided by residues Pro-68, 84–88 (SRGEQ), and 119–123 (FVICA). The Microbody targeting signal motif lies at 173 to 175 (TKL).

It belongs to the OHCU decarboxylase family. As to quaternary structure, homodimer.

It localises to the peroxisome. The catalysed reaction is 5-hydroxy-2-oxo-4-ureido-2,5-dihydro-1H-imidazole-5-carboxylate + H(+) = (S)-allantoin + CO2. Its pathway is purine metabolism; urate degradation; (S)-allantoin from urate: step 3/3. Its function is as follows. Catalyzes the stereoselective decarboxylation of 2-oxo-4-hydroxy-4-carboxy-5-ureidoimidazoline (OHCU) to (S)-allantoin. This chain is 2-oxo-4-hydroxy-4-carboxy-5-ureidoimidazoline decarboxylase (urad), found in Amia calva (Bowfin).